Consider the following 568-residue polypeptide: Glucose-6-phosphate isomerase, cytosolic 1 (568 aa).

Residue E360 is the Proton donor of the active site. Residues H391 and K516 contribute to the active site.

This sequence belongs to the GPI family. In terms of assembly, homodimer.

It is found in the cytoplasm. The enzyme catalyses alpha-D-glucose 6-phosphate = beta-D-fructose 6-phosphate. Its pathway is carbohydrate degradation; glycolysis; D-glyceraldehyde 3-phosphate and glycerone phosphate from D-glucose: step 2/4. The chain is Glucose-6-phosphate isomerase, cytosolic 1 (PGIC1) from Clarkia williamsonii.